We begin with the raw amino-acid sequence, 366 residues long: RISC-loading complex subunit TARBP2 (366 aa).

Sufficient for interaction with PRKRA regions lie at residues 22 to 105 (MLAA…EPAL), 152 to 234 (SPQQ…DARD), and 287 to 366 (LGAL…AGSK). The region spanning 30 to 97 (TPISLLQEYG…AEVALKHLKG (68 aa)) is the DRBM 1 domain. Serine 152 carries the phosphoserine modification. DRBM domains are found at residues 159–227 (NPVG…RVHT) and 293–361 (ACCR…YLKI). A sufficient for interaction with DICER1 region spans residues 228–366 (VPLDARDGNE…QYLKIMAGSK (139 aa)).

The protein belongs to the TARBP2 family. Self-associates. Component of the RISC loading complex (RLC), or micro-RNA (miRNA) loading complex (miRLC), which is composed of DICER1, AGO2 and TARBP2. Note that the trimeric RLC/miRLC is also referred to as RISC. Interacts with EIF2AK2/PKR and inhibits its protein kinase activity. Interacts with DHX9 and PRKRA. Interacts with DICER1, AGO2, MOV10, EIF6 and RPL7A (60S ribosome subunit); they form a large RNA-induced silencing complex (RISC). Interacts with IRF7; this interaction prevents IRF7 phosphorylation and activation. In terms of assembly, (Microbial infection) Interacts with FTSJ3; forms a complex with FTSJ3 and HIV-1 TAR RNA. As to quaternary structure, (Microbial infection) Interacts with ebolavirus VP30; this interaction, which occurs only in the presence of siRNA, prevents TARBP2 binding to DICER1 and thus allows the virus to counteract host RNA silencing. (Microbial infection) Interacts with ebolavirus VP35; this interaction prevents TARBP2 binding to DICER1 and thus allows the virus to counteract host RNA silencing.

It is found in the cytoplasm. Its subcellular location is the perinuclear region. It localises to the nucleus. Its function is as follows. Required for formation of the RNA induced silencing complex (RISC). Component of the RISC loading complex (RLC), also known as the micro-RNA (miRNA) loading complex (miRLC), which is composed of DICER1, AGO2 and TARBP2. Within the RLC/miRLC, DICER1 and TARBP2 are required to process precursor miRNAs (pre-miRNAs) to mature miRNAs and then load them onto AGO2. AGO2 bound to the mature miRNA constitutes the minimal RISC and may subsequently dissociate from DICER1 and TARBP2. May also play a role in the production of short interfering RNAs (siRNAs) from double-stranded RNA (dsRNA) by DICER1. Binds in vitro to the PRM1 3'-UTR. Seems to act as a repressor of translation. For some pre-miRNA substrates, may also alter the choice of cleavage site by DICER1. Negatively regulates IRF7-mediated IFN-beta signaling triggered by viral infection by inhibiting the phosphorylation of IRF7 and promoting its 'Lys'-48-linked ubiquitination and degradation. In terms of biological role, (Microbial infection) Binds to the HIV-1 TAR RNA which is located in the long terminal repeat (LTR) of HIV-1, and stimulates translation of TAR-containing RNAs. This is achieved in part at least by binding to and inhibiting EIF2AK2/PKR, thereby reducing phosphorylation and inhibition of EIF2S1/eIF-2-alpha. May also promote translation of TAR-containing RNAs independently of EIF2AK2/PKR. Mediates recruitment of FTSJ3 methyltransferase to HIV-1 RNA, leading to 2'-O-methylation of the viral genome, allowing HIV-1 to escape the innate immune system. The protein is RISC-loading complex subunit TARBP2 of Homo sapiens (Human).